A 294-amino-acid chain; its full sequence is Indole-3-glycerol phosphate synthase (294 aa).

This sequence belongs to the TrpC family.

It carries out the reaction 1-(2-carboxyphenylamino)-1-deoxy-D-ribulose 5-phosphate + H(+) = (1S,2R)-1-C-(indol-3-yl)glycerol 3-phosphate + CO2 + H2O. Its pathway is amino-acid biosynthesis; L-tryptophan biosynthesis; L-tryptophan from chorismate: step 4/5. This Synechococcus sp. (strain WH7803) protein is Indole-3-glycerol phosphate synthase.